The primary structure comprises 281 residues: Pantothenate synthetase (281 aa).

ATP is bound at residue 30–37 (MGYLHEGH). Histidine 37 functions as the Proton donor in the catalytic mechanism. Residue glutamine 61 coordinates (R)-pantoate. Glutamine 61 contributes to the beta-alanine binding site. An ATP-binding site is contributed by 147-150 (GQKD). Glutamine 153 is a binding site for (R)-pantoate. ATP is bound by residues valine 176 and 184-187 (MSSR).

The protein belongs to the pantothenate synthetase family. In terms of assembly, homodimer.

The protein localises to the cytoplasm. It carries out the reaction (R)-pantoate + beta-alanine + ATP = (R)-pantothenate + AMP + diphosphate + H(+). The protein operates within cofactor biosynthesis; (R)-pantothenate biosynthesis; (R)-pantothenate from (R)-pantoate and beta-alanine: step 1/1. Its function is as follows. Catalyzes the condensation of pantoate with beta-alanine in an ATP-dependent reaction via a pantoyl-adenylate intermediate. This Caldicellulosiruptor saccharolyticus (strain ATCC 43494 / DSM 8903 / Tp8T 6331) protein is Pantothenate synthetase.